The sequence spans 418 residues: Gamma-glutamyl phosphate reductase (418 aa).

It belongs to the gamma-glutamyl phosphate reductase family.

Its subcellular location is the cytoplasm. The enzyme catalyses L-glutamate 5-semialdehyde + phosphate + NADP(+) = L-glutamyl 5-phosphate + NADPH + H(+). It functions in the pathway amino-acid biosynthesis; L-proline biosynthesis; L-glutamate 5-semialdehyde from L-glutamate: step 2/2. In terms of biological role, catalyzes the NADPH-dependent reduction of L-glutamate 5-phosphate into L-glutamate 5-semialdehyde and phosphate. The product spontaneously undergoes cyclization to form 1-pyrroline-5-carboxylate. This Nitrosococcus oceani (strain ATCC 19707 / BCRC 17464 / JCM 30415 / NCIMB 11848 / C-107) protein is Gamma-glutamyl phosphate reductase.